Consider the following 503-residue polypeptide: Xylan O-acetyltransferase 12 (503 aa).

Over 1–54 (MWSALFSHLREVHKRSGVKEEKLIMKSPAAAGEAAGCHKPQATATNKMTVLQSP) the chain is Cytoplasmic. A helical; Signal-anchor for type II membrane protein membrane pass occupies residues 55–77 (LGLRTILTSLVAFFIVVSSVSLL). At 78 to 503 (FDRSQDAQAQ…EFLYAYLMHK (426 aa)) the chain is on the lumenal side. 4 disulfide bridges follow: Cys153-Cys204, Cys175-Cys240, Cys184-Cys484, and Cys400-Cys480. N-linked (GlcNAc...) asparagine glycans are attached at residues Asn154, Asn164, Asn190, and Asn210. Residues 227-229 (GDS) carry the GDS motif motif. Ser229 serves as the catalytic Nucleophile. Residues Asn256, Asn268, Asn373, Asn402, and Asn443 are each glycosylated (N-linked (GlcNAc...) asparagine). Asp479 acts as the Proton donor in catalysis. The DXXH motif motif lies at 479–482 (DCTH). The active-site Proton acceptor is His482.

This sequence belongs to the PC-esterase family. TBL subfamily.

The protein resides in the golgi apparatus membrane. Functionally, xylan acetyltransferase required for 2-O- and 3-O-monoacetylation of xylosyl residues in xylan. Catalyzes the 2-O-acetylation of xylan, followed by nonenzymatic acetyl migration to the O-3 position, resulting in products that are monoacetylated at both O-2 and O-3 positions. This is Xylan O-acetyltransferase 12 from Oryza sativa subsp. japonica (Rice).